A 29-amino-acid polypeptide reads, in one-letter code: Bacteriocin (29 aa).

The protein resides in the secreted. Functionally, has antibacterial activity against strains of L.monocytogenes, L.lactis, B.subtilis, S.typhi, S.aureus, C.perfringens, E.aerogenes and M.luteus but not against E.coli, S.sonnei, S.pneumoniae, S.faecalis, P.aeruginosa, K.pneumoniae or P.vulgaris. The protein is Bacteriocin of Lactococcus lactis subsp. lactis (Streptococcus lactis).